Consider the following 1161-residue polypeptide: Voltage-gated inwardly rectifying potassium channel KCNH2 (1161 aa).

The Cytoplasmic portion of the chain corresponds to 1 to 405 (MPVRRGHVAP…RIHRWTILHY (405 aa)). The PAS domain maps to 17–88 (TIIRKFEGQS…AAQIAQALLG (72 aa)). The region spanning 92 to 144 (RKVEIAFYRKDGSCFLCLVDVVPVKNEDGAVIMFILNFEVVMEKDMVGSPARD) is the PAC domain. The tract at residues 233–286 (ALVGSCSPPPPVSAPGPHPSLRAHSLNPDASGSSCSLARTRSRESCASVRRASS) is disordered. Residues S239 and S245 each carry the phosphoserine modification. Positions 239–250 (SPPPPVSAPGPH) are enriched in pro residues. Over residues 260–271 (PDASGSSCSLAR) the composition is skewed to polar residues. Phosphoserine occurs at positions 285, 286, 322, and 353. A helical membrane pass occupies residues 406-426 (SPFKAVWDWLILLLVIYTAVF). Topologically, residues 427–452 (TPYSAAFLLKETEEGPPAPECGYACQ) are extracellular. The helical transmembrane segment at 453-473 (PLAVVDLIVDIMFIVDILINF) threads the bilayer. Residues 474-497 (RTTYVNANEEVVSHPGRIAVHYFK) lie on the Cytoplasmic side of the membrane. Residues 498-518 (GWFLIDMVAAIPFDLLIFGSG) form a helical membrane-spanning segment. Residues 519 to 522 (SEEL) lie on the Extracellular side of the membrane. A helical; Voltage-sensor membrane pass occupies residues 523–543 (IGLLKTARLLRLVRVARKLDR). Over 544–549 (YSEYGA) the chain is Cytoplasmic. A helical transmembrane segment spans residues 550 to 570 (AVLLLLMCTFALIAHWLACIW). At 571–613 (YAIGNMEQPHMDSRIGWLHNLGDQMGKPYNSSGLGGPSIKDKY) the chain is on the extracellular side. N600 carries N-linked (GlcNAc...) asparagine glycosylation. The segment at residues 614 to 634 (VTGLYFTFSSLTSVGFGNVSP) is an intramembrane region (pore-forming). Residues 626–631 (SVGFGN) carry the Selectivity filter motif. Topologically, residues 635–640 (NTNSEK) are extracellular. Residues 641–661 (IFSICVMLIGSLMYASIFGNV) traverse the membrane as a helical segment. Residues 662 to 1161 (SAIIQRLYSG…LHRHGSDPGS (500 aa)) lie on the Cytoplasmic side of the membrane. The segment at 744-844 (PFRGATKDCL…IHRDDLLEVL (101 aa)) is cNMP-binding domain. A disordered region spans residues 872–985 (GSPGSTEWEG…TEDCEKSSDT (114 aa)). Phosphoserine is present on residues S873 and S876. Positions 885–894 (RQRKRKLSFR) are enriched in basic residues. Over residues 930 to 941 (GESPSSGPSSPE) the composition is skewed to low complexity. A compositionally biased stretch (pro residues) spans 962–972 (SPRPPGEPPGG). Residue R1016 is modified to Omega-N-methylarginine. The stretch at 1037-1064 (RGDVESRLDALQRQLNRLETRLSADMAT) forms a coiled coil. The interval 1121–1161 (ELPPGAPELPQEGPTRRLSLPGQLGALTSQPLHRHGSDPGS) is disordered. A Phosphoserine modification is found at S1139.

Belongs to the potassium channel family. H (Eag) (TC 1.A.1.20) subfamily. Kv11.1/KCNH2 sub-subfamily. As to quaternary structure, the potassium channel is probably composed of a homo- or heterotetrameric complex of pore-forming alpha subunits that can associate with modulating beta subunits. Interacts with DNAJB12 and DNAJB14; chaperones DNAJB12 and DNAJB14 promote tetramerization. Heteromultimer with KCNH6/ERG2 and KCNH7/ERG3. Interacts with ALG10B. Forms a stable complex with KCNE1 or KCNE2, and that this heteromultimerization regulates Inward rectifier potassium channel activity. Interacts with CANX. The core-glycosylated, but not the fully glycosylated form interacts with RNF207. Interacts with NDFIP1 and NDFIP2; this interaction decreases the cell membrane expression by targeting KCNH2, through interaction with NEDD4L, for the degradation through the multivesicular bodies (MVBs)-lysosomal pathway. In terms of processing, phosphorylated on serine and threonine residues. Phosphorylation by PKA inhibits ion conduction. As to expression, detected in heart, both in atrium and in left ventricle.

It is found in the cell membrane. The catalysed reaction is K(+)(in) = K(+)(out). In terms of biological role, pore-forming (alpha) subunit of voltage-gated inwardly rectifying potassium channel. Characterized by unusual gating kinetics by producing relatively small outward currents during membrane depolarization and large inward currents during subsequent repolarization which reflect a rapid inactivation during depolarization and quick recovery from inactivation but slow deactivation (closing) during repolarization. Channel properties are modulated by cAMP and subunit assembly. Forms a stable complex with KCNE1 or KCNE2, and that this heteromultimerization regulates inward rectifier potassium channel activity. This chain is Voltage-gated inwardly rectifying potassium channel KCNH2, found in Oryctolagus cuniculus (Rabbit).